Consider the following 402-residue polypeptide: Propionate kinase (402 aa).

ATP is bound by residues Asn11 and Lys18. Mg(2+) is bound at residue Asn11. Residue Arg86 coordinates substrate. The Proton donor/acceptor role is filled by Asp143. ATP-binding positions include His175, 203–207, 278–280, and 326–330; these read HLGNG, DLR, and GIGEN.

It belongs to the acetokinase family. TdcD subfamily. Homodimer. Mg(2+) is required as a cofactor.

The catalysed reaction is propanoate + ATP = propanoyl phosphate + ADP. Its pathway is amino-acid degradation; L-threonine degradation via propanoate pathway; propanoate from L-threonine: step 4/4. In terms of biological role, catalyzes the conversion of propionyl phosphate and ADP to propionate and ATP. The sequence is that of Propionate kinase from Edwardsiella piscicida.